The chain runs to 236 residues: 7-cyano-7-deazaguanine synthase (236 aa).

7–17 (CSGGLDSVSLA) lines the ATP pocket. Zn(2+)-binding residues include Cys-185, Cys-193, Cys-196, and Cys-199.

This sequence belongs to the QueC family. It depends on Zn(2+) as a cofactor.

It catalyses the reaction 7-carboxy-7-deazaguanine + NH4(+) + ATP = 7-cyano-7-deazaguanine + ADP + phosphate + H2O + H(+). The protein operates within purine metabolism; 7-cyano-7-deazaguanine biosynthesis. Functionally, catalyzes the ATP-dependent conversion of 7-carboxy-7-deazaguanine (CDG) to 7-cyano-7-deazaguanine (preQ(0)). The polypeptide is 7-cyano-7-deazaguanine synthase (Rhizobium etli (strain ATCC 51251 / DSM 11541 / JCM 21823 / NBRC 15573 / CFN 42)).